A 465-amino-acid chain; its full sequence is Glutamate--tRNA ligase (465 aa).

Residues 11 to 21 carry the 'HIGH' region motif; that stretch reads PSPTGFIHLGN. Residues 120–131 are compositionally biased toward basic and acidic residues; it reads KPRYDGTWRPEP. The tract at residues 120–139 is disordered; it reads KPRYDGTWRPEPGKVLPTPP. Residues 243–247 carry the 'KMSKS' region motif; that stretch reads KMSKR. Position 246 (K246) interacts with ATP.

Belongs to the class-I aminoacyl-tRNA synthetase family. Glutamate--tRNA ligase type 1 subfamily. In terms of assembly, monomer.

The protein resides in the cytoplasm. The enzyme catalyses tRNA(Glu) + L-glutamate + ATP = L-glutamyl-tRNA(Glu) + AMP + diphosphate. In terms of biological role, catalyzes the attachment of glutamate to tRNA(Glu) in a two-step reaction: glutamate is first activated by ATP to form Glu-AMP and then transferred to the acceptor end of tRNA(Glu). This Ralstonia nicotianae (strain ATCC BAA-1114 / GMI1000) (Ralstonia solanacearum) protein is Glutamate--tRNA ligase.